A 96-amino-acid polypeptide reads, in one-letter code: MQIRPLHDRVIVKRLEEERKTASGIVIPDSAAEKPDQGEIIAVGKGKVGDDGNVRPLEVKVGDKVLFGKYSGQTVKISGEELLVMREEDIMGVVEG.

Belongs to the GroES chaperonin family. In terms of assembly, heptamer of 7 subunits arranged in a ring. Interacts with the chaperonin GroEL.

It localises to the cytoplasm. Together with the chaperonin GroEL, plays an essential role in assisting protein folding. The GroEL-GroES system forms a nano-cage that allows encapsulation of the non-native substrate proteins and provides a physical environment optimized to promote and accelerate protein folding. GroES binds to the apical surface of the GroEL ring, thereby capping the opening of the GroEL channel. The polypeptide is Co-chaperonin GroES (Nitrosospira multiformis (strain ATCC 25196 / NCIMB 11849 / C 71)).